Reading from the N-terminus, the 61-residue chain is Disintegrin atroxatin (61 aa).

Residues 1-61 form the Disintegrin domain; that stretch reads NPCCDAATCK…ADCPRKGIYG (61 aa). 5 cysteine pairs are disulfide-bonded: C3–C26, C9–C23, C17–C23, C22–C47, and C35–C54. Residues 39–41 carry the Cell attachment site motif; sequence RGD.

It belongs to the venom metalloproteinase (M12B) family. P-II subfamily. P-IIa sub-subfamily. As to quaternary structure, monomer (disintegrin). As to expression, expressed by the venom gland.

Its subcellular location is the secreted. Inhibits fibrinogen interaction with platelets. Acts by binding to alpha-IIb/beta-3 (ITGA2B/ITGB3) on the platelet surface and inhibits aggregation induced by ADP, thrombin, platelet-activating factor and collagen. This is Disintegrin atroxatin from Crotalus atrox (Western diamondback rattlesnake).